Reading from the N-terminus, the 47-residue chain is KSCCRNTWARNCYNVCRLPGTISREICAKKCDCKIISGTTCPSDYPK.

Cystine bridges form between C3/C41, C4/C33, C12/C31, and C16/C27.

The protein belongs to the plant thionin (TC 1.C.44) family. 4 C-C subfamily.

It localises to the secreted. Functionally, thionins are small plant proteins which are toxic to animal cells. They seem to exert their toxic effect at the level of the cell membrane. Their precise function is not known. The chain is Thionin (THI1) from Pyrularia pubera (Buffalo nut).